A 673-amino-acid polypeptide reads, in one-letter code: uncharacterized protein (673 aa).

The interval 1 to 95 (MLNGEKSALG…QSSAIADSIG (95 aa)) is disordered. Over residues 13–40 (PSNSNSSSKLNAKSPNFIPSSSNIPRSS) the composition is skewed to low complexity. The span at 42-60 (KTKEHSADRKPHRNSEKKT) shows a compositional bias: basic and acidic residues. The RING-type zinc-finger motif lies at 214–273 (CPFCLEEKPVAARMSRCGHVYCFSCLLRFVETPTAAEVKAAETSGTKIVKCGHRSCPICW). Positions 649 to 673 (SAPSKNSKNKKKKKLVLLSTGAAHR) are disordered.

It localises to the cytoplasm. The protein localises to the nucleus. This is an uncharacterized protein from Schizosaccharomyces pombe (strain 972 / ATCC 24843) (Fission yeast).